Here is a 376-residue protein sequence, read N- to C-terminus: Chaperone protein DnaJ (376 aa).

The J domain maps to 5–70; sequence DYYEVLGVGR…DKKAAYDQFG (66 aa). A CR-type zinc finger spans residues 132–210; the sequence is GLTKELRIPT…CHGDGRVEKS (79 aa). Cys-145, Cys-148, Cys-162, Cys-165, Cys-184, Cys-187, Cys-198, and Cys-201 together coordinate Zn(2+). CXXCXGXG motif repeat units lie at residues 145-152, 162-169, 184-191, and 198-205; these read CDLCDGSG, CTTCHGQG, CPTCHGRG, and CSKCHGDG.

This sequence belongs to the DnaJ family. In terms of assembly, homodimer. Zn(2+) serves as cofactor.

It is found in the cytoplasm. Participates actively in the response to hyperosmotic and heat shock by preventing the aggregation of stress-denatured proteins and by disaggregating proteins, also in an autonomous, DnaK-independent fashion. Unfolded proteins bind initially to DnaJ; upon interaction with the DnaJ-bound protein, DnaK hydrolyzes its bound ATP, resulting in the formation of a stable complex. GrpE releases ADP from DnaK; ATP binding to DnaK triggers the release of the substrate protein, thus completing the reaction cycle. Several rounds of ATP-dependent interactions between DnaJ, DnaK and GrpE are required for fully efficient folding. Also involved, together with DnaK and GrpE, in the DNA replication of plasmids through activation of initiation proteins. This is Chaperone protein DnaJ from Shewanella sp. (strain W3-18-1).